We begin with the raw amino-acid sequence, 359 residues long: Guanine nucleotide-binding protein alpha-4 subunit (359 aa).

Residue Gly2 is the site of N-myristoyl glycine attachment. Residue Cys3 is the site of S-palmitoyl cysteine attachment. Residues Gly31–Tyr359 enclose the G-alpha domain. Residues Lys34–Thr47 are G1 motif. Residues Gly39 to Ser46, Leu178 to Ser184, Asp203 to Gln207, Asn272 to Asp275, and Ala331 contribute to the GTP site. Ser46 lines the Mg(2+) pocket. The interval Asp176–Ser184 is G2 motif. The G3 motif stretch occupies residues Phe199–Arg208. A G4 motif region spans residues Ile268–Asp275. The segment at Thr329–Thr334 is G5 motif.

Belongs to the G-alpha family. G(i/o/t/z) subfamily. As to quaternary structure, g proteins are composed of 3 units; alpha, beta and gamma. The alpha chain contains the guanine nucleotide binding site. As to expression, expressed in ASI neurons.

Guanine nucleotide-binding proteins (G proteins) are involved as modulators or transducers in various transmembrane signaling systems. Acts in concert with npr-15 to activate TGF-beta-like daf-7 secretion in the ASI neuron, thereby promoting larval development and inhibition of dauer diapause. In Caenorhabditis elegans, this protein is Guanine nucleotide-binding protein alpha-4 subunit (gpa-4).